The chain runs to 97 residues: Ferredoxin-like protein YdiT (97 aa).

The protein belongs to the bacterial-type ferredoxin family. FixX subfamily.

In terms of biological role, could be a 3Fe-4S cluster-containing protein. Probably participates in a redox process with YdiQ, YdiR and YdiS. The sequence is that of Ferredoxin-like protein YdiT (ydiT) from Escherichia coli (strain K12).